The chain runs to 216 residues: Small ribosomal subunit protein uS3c (216 aa).

The KH type-2 domain maps to 43 to 118 (IKNYIQKNRR…KLNIAIVKVT (76 aa)).

This sequence belongs to the universal ribosomal protein uS3 family. Part of the 30S ribosomal subunit.

It is found in the plastid. The protein localises to the chloroplast. The sequence is that of Small ribosomal subunit protein uS3c (rps3) from Phaseolus angularis (Azuki bean).